Here is a 99-residue protein sequence, read N- to C-terminus: Cobalt transport protein CbiN (99 aa).

The next 2 membrane-spanning stretches (helical) occupy residues 6–26 and 68–88; these read VLMI…YSGL and SLLF…FFGY.

This sequence belongs to the CbiN family. As to quaternary structure, forms an energy-coupling factor (ECF) transporter complex composed of an ATP-binding protein (A component, CbiO), a transmembrane protein (T component, CbiQ) and 2 possible substrate-capture proteins (S components, CbiM and CbiN) of unknown stoichimetry.

Its subcellular location is the cell membrane. Its pathway is cofactor biosynthesis; adenosylcobalamin biosynthesis. Its function is as follows. Part of the energy-coupling factor (ECF) transporter complex CbiMNOQ involved in cobalt import. The polypeptide is Cobalt transport protein CbiN (Methanococcus vannielii (strain ATCC 35089 / DSM 1224 / JCM 13029 / OCM 148 / SB)).